Reading from the N-terminus, the 689-residue chain is Glycine--tRNA ligase beta subunit (689 aa).

The protein belongs to the class-II aminoacyl-tRNA synthetase family. In terms of assembly, tetramer of two alpha and two beta subunits.

The protein localises to the cytoplasm. The catalysed reaction is tRNA(Gly) + glycine + ATP = glycyl-tRNA(Gly) + AMP + diphosphate. The polypeptide is Glycine--tRNA ligase beta subunit (Dictyoglomus thermophilum (strain ATCC 35947 / DSM 3960 / H-6-12)).